Reading from the N-terminus, the 402-residue chain is Serine--glyoxylate aminotransferase (402 aa).

An N6-(pyridoxal phosphate)lysine modification is found at Lys-201.

This sequence belongs to the class-V pyridoxal-phosphate-dependent aminotransferase family. Pyridoxal 5'-phosphate is required as a cofactor.

The enzyme catalyses glyoxylate + L-serine = 3-hydroxypyruvate + glycine. The protein operates within one-carbon metabolism; formaldehyde assimilation via serine pathway. This Methylorubrum extorquens (strain ATCC 14718 / DSM 1338 / JCM 2805 / NCIMB 9133 / AM1) (Methylobacterium extorquens) protein is Serine--glyoxylate aminotransferase.